A 260-amino-acid polypeptide reads, in one-letter code: Coiled-coil domain-containing protein 172 (260 aa).

Residues 13–194 adopt a coiled-coil conformation; the sequence is SEHQAEESRR…FEDKKHEAIC (182 aa).

The protein belongs to the CCDC172 family. In terms of assembly, may interact with TEKT2.

It is found in the cytoplasm. Its subcellular location is the cell projection. The protein resides in the cilium. This is Coiled-coil domain-containing protein 172 (CCDC172) from Bos taurus (Bovine).